A 322-amino-acid chain; its full sequence is Tubulin alpha-4 chain (322 aa).

Residues serine 15, glycine 19, threonine 20, threonine 54, asparagine 81, and asparagine 103 each coordinate GTP. Glutamate 129 is a catalytic residue.

It belongs to the tubulin family. In terms of assembly, dimer of alpha and beta chains. A typical microtubule is a hollow water-filled tube with an outer diameter of 25 nm and an inner diameter of 15 nM. Alpha-beta heterodimers associate head-to-tail to form protofilaments running lengthwise along the microtubule wall with the beta-tubulin subunit facing the microtubule plus end conferring a structural polarity. Microtubules usually have 13 protofilaments but different protofilament numbers can be found in some organisms and specialized cells. Mg(2+) serves as cofactor. Some glutamate residues at the C-terminus are polyglycylated, resulting in polyglycine chains on the gamma-carboxyl group. Glycylation is mainly limited to tubulin incorporated into axonemes (cilia and flagella) whereas glutamylation is prevalent in neuronal cells, centrioles, axonemes, and the mitotic spindle. Both modifications can coexist on the same protein on adjacent residues, and lowering polyglycylation levels increases polyglutamylation, and reciprocally. The precise function of polyglycylation is still unclear. In terms of processing, some glutamate residues at the C-terminus are polyglutamylated, resulting in polyglutamate chains on the gamma-carboxyl group. Polyglutamylation plays a key role in microtubule severing by spastin (SPAST). SPAST preferentially recognizes and acts on microtubules decorated with short polyglutamate tails: severing activity by SPAST increases as the number of glutamates per tubulin rises from one to eight, but decreases beyond this glutamylation threshold.

It localises to the cytoplasm. It is found in the cytoskeleton. It carries out the reaction GTP + H2O = GDP + phosphate + H(+). Its function is as follows. Tubulin is the major constituent of microtubules, a cylinder consisting of laterally associated linear protofilaments composed of alpha- and beta-tubulin heterodimers. Microtubules grow by the addition of GTP-tubulin dimers to the microtubule end, where a stabilizing cap forms. Below the cap, tubulin dimers are in GDP-bound state, owing to GTPase activity of alpha-tubulin. This Gallus gallus (Chicken) protein is Tubulin alpha-4 chain.